The chain runs to 101 residues: UPF0235 protein MmarC5_0538 (101 aa).

This sequence belongs to the UPF0235 family.

In Methanococcus maripaludis (strain C5 / ATCC BAA-1333), this protein is UPF0235 protein MmarC5_0538.